We begin with the raw amino-acid sequence, 349 residues long: MSILFHAYPLARPALFAMDAETAHEVTLAQLQRAYDCGLTRKLLHAQPEAPATLMGLSLRNPVGLAAGLDKNGAHIDALGNLGFGFVEVGTVTPRAQPGNPKPRMFRLPRANALINRLGFNNQGLDAFIANVQRSQWRSQGGILGLNIGKNADTPIERAAEDYLISLAGVYPHADYVTVNISSPNTKNLRALQGGDELSALLGQLQERRLALADQHQRHVPLAVKIAPDLSDDQIDAIAEILPRHGIDGVIATNTTLARDAVQGLPHAEEAGGVSGAPVHELSLRVIERLRSRLGDAVAIIGVGGILSGRQASEKMAAGAQAVQLYTGLIYRGPALVGECVRALAQGSR.

Residues 67-71 (AGLDK) and threonine 91 each bind FMN. Lysine 71 contacts substrate. A substrate-binding site is contributed by 116 to 120 (NRLGF). FMN-binding residues include asparagine 147 and asparagine 180. Asparagine 180 serves as a coordination point for substrate. Catalysis depends on serine 183, which acts as the Nucleophile. A substrate-binding site is contributed by asparagine 185. FMN-binding residues include lysine 225 and threonine 253. 254 to 255 (NT) lines the substrate pocket. Residues glycine 276, glycine 305, and 326 to 327 (YT) each bind FMN.

Belongs to the dihydroorotate dehydrogenase family. Type 2 subfamily. In terms of assembly, monomer. It depends on FMN as a cofactor.

The protein resides in the cell membrane. It catalyses the reaction (S)-dihydroorotate + a quinone = orotate + a quinol. The protein operates within pyrimidine metabolism; UMP biosynthesis via de novo pathway; orotate from (S)-dihydroorotate (quinone route): step 1/1. Functionally, catalyzes the conversion of dihydroorotate to orotate with quinone as electron acceptor. In Bordetella parapertussis (strain 12822 / ATCC BAA-587 / NCTC 13253), this protein is Dihydroorotate dehydrogenase (quinone).